A 234-amino-acid chain; its full sequence is Ion-translocating oxidoreductase complex subunit E (234 aa).

5 helical membrane-spanning segments follow: residues 62-82, 92-112, 116-136, 151-171, and 205-225; these read LGLG…ISLF, IPIY…LMNA, TLYQ…IIIG, IWDG…LGAL, and SFLL…LLAI.

Belongs to the NqrDE/RnfAE family. As to quaternary structure, the complex is composed of six subunits: RnfA, RnfB, RnfC, RnfD, RnfE and RnfG.

The protein resides in the cell inner membrane. In terms of biological role, part of a membrane-bound complex that couples electron transfer with translocation of ions across the membrane. The sequence is that of Ion-translocating oxidoreductase complex subunit E from Haemophilus influenzae (strain PittGG).